We begin with the raw amino-acid sequence, 729 residues long: Phosphoribosylformylglycinamidine synthase subunit PurL (729 aa).

His54 is an active-site residue. ATP is bound by residues Tyr57 and Lys96. Residue Glu98 coordinates Mg(2+). Substrate-binding positions include 99 to 102 and Arg121; that span reads SHNH. His100 serves as the catalytic Proton acceptor. Asp122 is a Mg(2+) binding site. A substrate-binding site is contributed by Gln245. A Mg(2+)-binding site is contributed by Asp273. 317-319 is a substrate binding site; sequence ETQ. ATP contacts are provided by Asp495 and Gly532. Residue Asn533 coordinates Mg(2+). Residue Ser535 participates in substrate binding.

The protein belongs to the FGAMS family. Monomer. Part of the FGAM synthase complex composed of 1 PurL, 1 PurQ and 2 PurS subunits.

Its subcellular location is the cytoplasm. It catalyses the reaction N(2)-formyl-N(1)-(5-phospho-beta-D-ribosyl)glycinamide + L-glutamine + ATP + H2O = 2-formamido-N(1)-(5-O-phospho-beta-D-ribosyl)acetamidine + L-glutamate + ADP + phosphate + H(+). It functions in the pathway purine metabolism; IMP biosynthesis via de novo pathway; 5-amino-1-(5-phospho-D-ribosyl)imidazole from N(2)-formyl-N(1)-(5-phospho-D-ribosyl)glycinamide: step 1/2. In terms of biological role, part of the phosphoribosylformylglycinamidine synthase complex involved in the purines biosynthetic pathway. Catalyzes the ATP-dependent conversion of formylglycinamide ribonucleotide (FGAR) and glutamine to yield formylglycinamidine ribonucleotide (FGAM) and glutamate. The FGAM synthase complex is composed of three subunits. PurQ produces an ammonia molecule by converting glutamine to glutamate. PurL transfers the ammonia molecule to FGAR to form FGAM in an ATP-dependent manner. PurS interacts with PurQ and PurL and is thought to assist in the transfer of the ammonia molecule from PurQ to PurL. This chain is Phosphoribosylformylglycinamidine synthase subunit PurL, found in Staphylococcus aureus (strain USA300).